A 163-amino-acid polypeptide reads, in one-letter code: Nucleotide-binding protein GK0742 (163 aa).

This sequence belongs to the YajQ family.

Nucleotide-binding protein. The protein is Nucleotide-binding protein GK0742 of Geobacillus kaustophilus (strain HTA426).